We begin with the raw amino-acid sequence, 335 residues long: Acetyl-coenzyme A carboxylase carboxyl transferase subunit alpha (335 aa).

The CoA carboxyltransferase C-terminal domain maps to 40–294 (QLETLATRRR…KGAIEKHLNE (255 aa)).

The protein belongs to the AccA family. As to quaternary structure, acetyl-CoA carboxylase is a heterohexamer composed of biotin carboxyl carrier protein (AccB), biotin carboxylase (AccC) and two subunits each of ACCase subunit alpha (AccA) and ACCase subunit beta (AccD).

Its subcellular location is the cytoplasm. It carries out the reaction N(6)-carboxybiotinyl-L-lysyl-[protein] + acetyl-CoA = N(6)-biotinyl-L-lysyl-[protein] + malonyl-CoA. It functions in the pathway lipid metabolism; malonyl-CoA biosynthesis; malonyl-CoA from acetyl-CoA: step 1/1. In terms of biological role, component of the acetyl coenzyme A carboxylase (ACC) complex. First, biotin carboxylase catalyzes the carboxylation of biotin on its carrier protein (BCCP) and then the CO(2) group is transferred by the carboxyltransferase to acetyl-CoA to form malonyl-CoA. This Prochlorococcus marinus subsp. pastoris (strain CCMP1986 / NIES-2087 / MED4) protein is Acetyl-coenzyme A carboxylase carboxyl transferase subunit alpha.